The primary structure comprises 89 residues: Small ribosomal subunit protein uS15 (89 aa).

The protein belongs to the universal ribosomal protein uS15 family. Part of the 30S ribosomal subunit. Forms a bridge to the 50S subunit in the 70S ribosome, contacting the 23S rRNA.

In terms of biological role, one of the primary rRNA binding proteins, it binds directly to 16S rRNA where it helps nucleate assembly of the platform of the 30S subunit by binding and bridging several RNA helices of the 16S rRNA. Its function is as follows. Forms an intersubunit bridge (bridge B4) with the 23S rRNA of the 50S subunit in the ribosome. The sequence is that of Small ribosomal subunit protein uS15 from Salinispora arenicola (strain CNS-205).